The sequence spans 146 residues: Cystatin-C (146 aa).

Positions 1–26 (MAGPLRAPLLLLAILAVALALSPAAG) are cleaved as a signal peptide. Ser43 is modified (phosphoserine). Positions 81–85 (QIVAG) match the Secondary area of contact motif. 2 disulfide bridges follow: Cys99–Cys109 and Cys123–Cys143.

Belongs to the cystatin family.

It localises to the secreted. In terms of biological role, as an inhibitor of cysteine proteinases, this protein is thought to serve an important physiological role as a local regulator of this enzyme activity. In Saimiri sciureus (Common squirrel monkey), this protein is Cystatin-C (CST3).